A 232-amino-acid chain; its full sequence is Uridylate kinase (232 aa).

Position 13–14 (13–14 (GS)) interacts with ATP. Gly52 contacts UMP. Positions 53 and 57 each coordinate ATP. UMP-binding positions include Asp74 and 122–128 (LQPGQST). ATP contacts are provided by Thr147, Tyr153, and Asp156.

This sequence belongs to the UMP kinase family. In terms of assembly, homohexamer.

The protein resides in the cytoplasm. It catalyses the reaction UMP + ATP = UDP + ADP. The protein operates within pyrimidine metabolism; CTP biosynthesis via de novo pathway; UDP from UMP (UMPK route): step 1/1. Inhibited by UTP. Functionally, catalyzes the reversible phosphorylation of UMP to UDP. In Thermofilum pendens (strain DSM 2475 / Hrk 5), this protein is Uridylate kinase.